We begin with the raw amino-acid sequence, 142 residues long: Cystatin-8 (142 aa).

A signal peptide spans 1–19 (MAKPLWLSLILFIIPVALA). An N-linked (GlcNAc...) asparagine glycan is attached at N39. Residues 77 to 81 (QITDR) carry the Secondary area of contact motif. Intrachain disulfides connect C95/C105 and C119/C139. N-linked (GlcNAc...) asparagine glycosylation is present at N100.

It belongs to the cystatin family. In terms of tissue distribution, proximal caput region of the epididymis. Lower expression in the testis. Within the testis it is localized to the elongating spermatids, whereas within the epididymis it is exclusively synthesized by the proximal caput epithelium.

Its subcellular location is the secreted. In terms of biological role, performs a specialized role during sperm development and maturation. The sequence is that of Cystatin-8 (Cst8) from Mus musculus (Mouse).